The primary structure comprises 1400 residues: DNA-directed RNA polymerase subunit beta' (1400 aa).

Zn(2+) contacts are provided by Cys71, Cys73, Cys86, and Cys89. Asp462, Asp464, and Asp466 together coordinate Mg(2+). Zn(2+)-binding residues include Cys811, Cys885, Cys892, and Cys895.

The protein belongs to the RNA polymerase beta' chain family. In terms of assembly, the RNAP catalytic core consists of 2 alpha, 1 beta, 1 beta' and 1 omega subunit. When a sigma factor is associated with the core the holoenzyme is formed, which can initiate transcription. The cofactor is Mg(2+). Zn(2+) serves as cofactor.

The enzyme catalyses RNA(n) + a ribonucleoside 5'-triphosphate = RNA(n+1) + diphosphate. In terms of biological role, DNA-dependent RNA polymerase catalyzes the transcription of DNA into RNA using the four ribonucleoside triphosphates as substrates. The sequence is that of DNA-directed RNA polymerase subunit beta' from Brucella abortus (strain S19).